Consider the following 652-residue polypeptide: Spermatogenesis-associated protein 13 (652 aa).

Residues 1 to 24 (MTSASPEDQNAPVGCPKGARRRRP) form a disordered region. Serine 78 carries the phosphoserine modification. The disordered stretch occupies residues 81–108 (IGLDRVGRRRQMRASNVSSDGGTEPSAL). The tract at residues 98–150 (SSDGGTEPSALVDDNGSEEDFSYEDLCQASPRYLQPGGEQLAINELISDGNVV) is ABR (APC-binding region) domain. Serine 114 carries the phosphoserine modification. An SH3 domain is found at 147–206 (GNVVCAEALWDHVTMDDQELGFKAGDVIQVLEASNKDWWWGRSEDKEAWFPASFVRLRVN). Residues 209-235 (ELSENSSSTPSEEQDEEASQSRHRHCE) form a disordered region. Residues 240 to 424 (MRTNVIREIM…KNVACLINER (185 aa)) enclose the DH domain. In terms of domain architecture, PH spans 455-561 (ELIHSGELTK…WLQACADERR (107 aa)). The tract at residues 561–652 (RRVQEDKEMG…TFNRLTPFRK (92 aa)) is C-terminal tail.

As to quaternary structure, interacts (via ABR and SH3 domain) with APC. The binding of APC enhances its GEF activity by relieving it from an autoinhibitory conformation, in which the ABR and SH3 domains are associated with the C-terminal tail. Interacts (via C-terminal tail) with PPP1R9B (via C-terminus). Interacts with RAC1. As to expression, expressed at high levels in the placenta, spleen and kidney, at moderate levels in lung, small intestine, liver, brain and heart, and at low levels in skeletal muscle. Expression is aberrantly enhanced in most colorectal tumors.

It is found in the cytoplasm. Its subcellular location is the cell projection. The protein resides in the filopodium. The protein localises to the lamellipodium. It localises to the ruffle membrane. It is found in the podosome. Its activity is regulated as follows. Both the ABR and the SH3 domains contribute to maintaining the protein in an inhibited conformation by associating with the C-terminal tail. Binding of these domains to the C-terminal tail inhibits the activity of the protein by blocking a region that is required for its GEF activity. Functionally, acts as a guanine nucleotide exchange factor (GEF) for RHOA, RAC1 and CDC42 GTPases. Regulates cell migration and adhesion assembly and disassembly through a RAC1, PI3K, RHOA and AKT1-dependent mechanism. Increases both RAC1 and CDC42 activity, but decreases the amount of active RHOA. Required for MMP9 up-regulation via the JNK signaling pathway in colorectal tumor cells. Involved in tumor angiogenesis and may play a role in intestinal adenoma formation and tumor progression. The sequence is that of Spermatogenesis-associated protein 13 from Homo sapiens (Human).